Consider the following 143-residue polypeptide: Nucleoside diphosphate kinase (143 aa).

Residues lysine 11, phenylalanine 59, arginine 87, threonine 93, arginine 104, and asparagine 114 each contribute to the ATP site. The Pros-phosphohistidine intermediate role is filled by histidine 117.

It belongs to the NDK family. In terms of assembly, homotetramer. The cofactor is Mg(2+).

It is found in the cytoplasm. The catalysed reaction is a 2'-deoxyribonucleoside 5'-diphosphate + ATP = a 2'-deoxyribonucleoside 5'-triphosphate + ADP. It carries out the reaction a ribonucleoside 5'-diphosphate + ATP = a ribonucleoside 5'-triphosphate + ADP. Major role in the synthesis of nucleoside triphosphates other than ATP. The ATP gamma phosphate is transferred to the NDP beta phosphate via a ping-pong mechanism, using a phosphorylated active-site intermediate. The chain is Nucleoside diphosphate kinase from Shewanella pealeana (strain ATCC 700345 / ANG-SQ1).